We begin with the raw amino-acid sequence, 347 residues long: MNPLAQPIIYSTIFAGTLITASSSHWFLAWVGLEMNMLAFIPVLTKKMNPRSTEAAIKYFLVQATASMILMMAILSNNLLSGQWTTTNITNQYSSLMILTALAMKLGMAPFHFWVPEVTQGTTLTSGLLLLTWQKLAPISIMYQIFPVMNVNILLTFSILSIMVGSWGGLNQTQLRKILAYSSITHVGWMTAVLPYNPNITIFNLTIYIVLTTTAFLALNLNSSTTTLLLSRSWNKLTWLLPLIPSTLLSLGGLPPLTGFLPKWLVIEELTKNGTLIIPTIMAIVTLINLYFYMRLIYSTSITLFPTSNNVKMKWQFENMKPTLLLPTLTILTTLLLPIAPLTFPAP.

A run of 11 helical transmembrane segments spans residues 1-21 (MNPLAQPIIYSTIFAGTLITA), 25-45 (HWFLAWVGLEMNMLAFIPVLT), 55-75 (AAIKYFLVQATASMILMMAIL), 96-116 (LMILTALAMKLGMAPFHFWVP), 123-143 (TLTSGLLLLTWQKLAPISIMY), 145-165 (IFPVMNVNILLTFSILSIMVG), 178-198 (ILAYSSITHVGWMTAVLPYNP), 199-219 (NITIFNLTIYIVLTTTAFLAL), 237-257 (LTWLLPLIPSTLLSLGGLPPL), 274-294 (GTLIIPTIMAIVTLINLYFYM), and 324-344 (LLLPTLTILTTLLLPIAPLTF).

It belongs to the complex I subunit 2 family. In terms of assembly, core subunit of respiratory chain NADH dehydrogenase (Complex I) which is composed of 45 different subunits. Interacts with TMEM242.

Its subcellular location is the mitochondrion inner membrane. The catalysed reaction is a ubiquinone + NADH + 5 H(+)(in) = a ubiquinol + NAD(+) + 4 H(+)(out). Functionally, core subunit of the mitochondrial membrane respiratory chain NADH dehydrogenase (Complex I) which catalyzes electron transfer from NADH through the respiratory chain, using ubiquinone as an electron acceptor. Essential for the catalytic activity and assembly of complex I. This Symphalangus syndactylus (Siamang) protein is NADH-ubiquinone oxidoreductase chain 2.